The chain runs to 687 residues: Probable ATP-dependent RNA helicase Dbp73D (687 aa).

2 disordered regions span residues 1 to 26 (MELF…TNNE) and 52 to 87 (TPIL…EEDV). 2 stretches are compositionally biased toward basic and acidic residues: residues 9 to 18 (YTEDLKEQKD) and 54 to 79 (ILEK…EKPL). Residues 160-168 (LFPVQKQVI) carry the Q motif motif. Residues 177–381 (KPPPFRPRDI…DLRLFQPRLF (205 aa)) enclose the Helicase ATP-binding domain. Residue 190-197 (APTGSGKT) participates in ATP binding. The DEAD box motif lies at 305–308 (DEAD). One can recognise a Helicase C-terminal domain in the interval 434-583 (TVFALVEKYK…EIHVSPDIEI (150 aa)). The tract at residues 646–675 (IVQSSKKSSETKNSKTKADKTKYQPKETKK) is disordered. Positions 652–675 (KSSETKNSKTKADKTKYQPKETKK) are enriched in basic and acidic residues.

It belongs to the DEAD box helicase family. DDX51/DBP6 subfamily. In terms of tissue distribution, expressed in the germline tissue of the ovary.

The protein resides in the nucleus. The protein localises to the nucleolus. It carries out the reaction ATP + H2O = ADP + phosphate + H(+). In terms of biological role, ATP-binding RNA helicase involved in the biogenesis of 60S ribosomal subunits. This is Probable ATP-dependent RNA helicase Dbp73D (Dbp73D) from Drosophila melanogaster (Fruit fly).